The primary structure comprises 163 residues: Pheromone-binding protein 1 (163 aa).

Positions Met1–Ser21 are cleaved as a signal peptide. Disulfide bonds link Cys40–Cys75, Cys71–Cys129, and Cys118–Cys138.

Belongs to the PBP/GOBP family. As to expression, antenna.

This major soluble protein in olfactory sensilla of male moths might serve to solubilize the extremely hydrophobic pheromone molecules and to transport pheromone through the aqueous lymph to receptors located on olfactory cilia. The sequence is that of Pheromone-binding protein 1 from Antheraea pernyi (Chinese oak silk moth).